Here is a 488-residue protein sequence, read N- to C-terminus: Proline--tRNA ligase (488 aa).

The protein belongs to the class-II aminoacyl-tRNA synthetase family. ProS type 3 subfamily. Homodimer.

The protein resides in the cytoplasm. It catalyses the reaction tRNA(Pro) + L-proline + ATP = L-prolyl-tRNA(Pro) + AMP + diphosphate. Catalyzes the attachment of proline to tRNA(Pro) in a two-step reaction: proline is first activated by ATP to form Pro-AMP and then transferred to the acceptor end of tRNA(Pro). The chain is Proline--tRNA ligase from Pyrobaculum islandicum (strain DSM 4184 / JCM 9189 / GEO3).